Consider the following 288-residue polypeptide: Fructose-bisphosphate aldolase (288 aa).

Ser-49 is a D-glyceraldehyde 3-phosphate binding site. The active-site Proton donor is the Asp-84. Residues His-85, Asp-105, Glu-135, and His-177 each contribute to the Zn(2+) site. Gly-178 is a dihydroxyacetone phosphate binding site. His-206 contributes to the Zn(2+) binding site. Dihydroxyacetone phosphate-binding positions include 207 to 209 (GGS) and 228 to 231 (NINT).

This sequence belongs to the class II fructose-bisphosphate aldolase family. Homodimer. Zn(2+) serves as cofactor.

It carries out the reaction beta-D-fructose 1,6-bisphosphate = D-glyceraldehyde 3-phosphate + dihydroxyacetone phosphate. It functions in the pathway carbohydrate degradation; glycolysis; D-glyceraldehyde 3-phosphate and glycerone phosphate from D-glucose: step 4/4. Functionally, catalyzes the aldol condensation of dihydroxyacetone phosphate (DHAP or glycerone-phosphate) with glyceraldehyde 3-phosphate (G3P) to form fructose 1,6-bisphosphate (FBP) in gluconeogenesis and the reverse reaction in glycolysis. This Mycoplasma genitalium (strain ATCC 33530 / DSM 19775 / NCTC 10195 / G37) (Mycoplasmoides genitalium) protein is Fructose-bisphosphate aldolase (fba).